Reading from the N-terminus, the 277-residue chain is Large ribosomal subunit protein uL2 (277 aa).

The interval 222 to 277 (GVAMNPVDHPHGGGEGRTSGGRHPVSPWGKPTKGKRTRSNKATDKFIMRSRHQRKK) is disordered.

This sequence belongs to the universal ribosomal protein uL2 family. In terms of assembly, part of the 50S ribosomal subunit. Forms a bridge to the 30S subunit in the 70S ribosome.

Functionally, one of the primary rRNA binding proteins. Required for association of the 30S and 50S subunits to form the 70S ribosome, for tRNA binding and peptide bond formation. It has been suggested to have peptidyltransferase activity; this is somewhat controversial. Makes several contacts with the 16S rRNA in the 70S ribosome. The protein is Large ribosomal subunit protein uL2 of Bartonella bacilliformis (strain ATCC 35685 / KC583 / Herrer 020/F12,63).